A 336-amino-acid polypeptide reads, in one-letter code: Anthranilate phosphoribosyltransferase (336 aa).

5-phospho-alpha-D-ribose 1-diphosphate-binding positions include Gly81, 84–85 (GD), Ser89, 91–94 (NIST), 109–117 (KHGNRGLSS), and Ala121. Gly81 contacts anthranilate. Ser93 lines the Mg(2+) pocket. Residue Asn112 coordinates anthranilate. Arg167 is a binding site for anthranilate. Positions 225 and 226 each coordinate Mg(2+).

The protein belongs to the anthranilate phosphoribosyltransferase family. Homodimer. It depends on Mg(2+) as a cofactor.

It carries out the reaction N-(5-phospho-beta-D-ribosyl)anthranilate + diphosphate = 5-phospho-alpha-D-ribose 1-diphosphate + anthranilate. It participates in amino-acid biosynthesis; L-tryptophan biosynthesis; L-tryptophan from chorismate: step 2/5. Catalyzes the transfer of the phosphoribosyl group of 5-phosphorylribose-1-pyrophosphate (PRPP) to anthranilate to yield N-(5'-phosphoribosyl)-anthranilate (PRA). This chain is Anthranilate phosphoribosyltransferase, found in Mesorhizobium japonicum (strain LMG 29417 / CECT 9101 / MAFF 303099) (Mesorhizobium loti (strain MAFF 303099)).